The chain runs to 1064 residues: MPKRADIKKILVIGSGPIIIGQAAEFDYSGTQASLSLREEGYSVVLVNSNPATIMTDTEIADQVYIEPLTLPFIKRILRKERPDALLATIGGQTALNLAKELAEDGILEELKIELLGTKLKAIEAAEDREKFKQLMEALKEPVPESRIARTLEQAVHFADQIGYPIIVRPAYTLGGTGGEIVENSEQLTEVAKNGLELSPVTQVLIEKSIAGYKEIEFEVMRDGNDNALIVASMENFDPVGIHTVDSIVVSPVQTLSDREYQMLRDAALKIIRALKIEGGVNIQLALDPDSLRYYIIEVNPRVSRSSALASKATGYPIAKMAAKIAIGLTLDEIVNPVTGTTKAEFEPALDYVAVKIPRWPFDKFAEADRELGTQMKATGEVMAIGRNFETALMKAIRSLEIGTFALDDLTYSDLSNQDLLNRLMPATDERLFMVADLLRRGITIGQIHEKSQIDEFFLDKILHLIEIEKELKMHVLDFKILKIAKENGFPDVTIARYWQLEEKELRHLRKKEDLFPVYKMVDTVAGEFSSKTPYYYSTYELENESLKEKRPSVLVVGSGPIRIGQGVEFDYATVHCVKAIQKAGYKAIVINSNPETVSTDFSVSDKLYFEPLTLEDVLNVIDLEKPIGVVVQFGGQTAINLAGRLENNGVKLLGTSLKDINRSEDREDFNQVIKKLDLSQPFGKTATTVTQALSVAEEVGYPLLIRPSYVLGGRAMEIVTNRQDLSDYMKRAVKVSLKHPVLIDSYLTGREAEIDLLSDGQTIIVPGIMEHIERAGVHSGDSMSVYPSQYLDQNVQEQMLDAAFKLAKELHTIGLMNVQFVIHEQQAYVIEVNPRASRTLPFISKATDLPLAQLATRVMLGEKLADLGFKSGLMAPKKLVYVKALVFSFNKLPKVDSSLGPEMKSTGEVMGVDRNLAKALYKAFVAAGFKVHEHGNVLFTIADRDKKEALALAKRFDELGYVLWATAGTSSFLHENHLPVRQLGKISEDQLNPVTAMRQGKLQIVINRLKTDEPLESDGRAIRAAAIENGVPLFTSLDTVAAFLQVLESRSFNVSAINKGDKS.

The carboxyphosphate synthetic domain stretch occupies residues 1 to 401 (MPKRADIKKI…ALMKAIRSLE (401 aa)). Residues Arg-129, Arg-169, Gly-175, Gly-176, Lys-208, Ile-210, Glu-215, Gly-241, Ile-242, His-243, Gln-284, and Glu-298 each contribute to the ATP site. The region spanning 133-327 (KQLMEALKEP…IAKMAAKIAI (195 aa)) is the ATP-grasp 1 domain. Mg(2+) is bound by residues Gln-284, Glu-298, and Asn-300. Positions 284, 298, and 300 each coordinate Mn(2+). The segment at 402–546 (IGTFALDDLT…YSTYELENES (145 aa)) is oligomerization domain. Residues 547-929 (LKEKRPSVLV…ALYKAFVAAG (383 aa)) form a carbamoyl phosphate synthetic domain region. Positions 671-861 (NQVIKKLDLS…LAQLATRVML (191 aa)) constitute an ATP-grasp 2 domain. Residues Arg-707, Ser-746, Leu-748, Glu-752, Gly-777, Val-778, His-779, Ser-780, Gln-820, and Glu-832 each coordinate ATP. 3 residues coordinate Mg(2+): Gln-820, Glu-832, and Asn-834. The Mn(2+) site is built by Gln-820, Glu-832, and Asn-834. The region spanning 930 to 1064 (FKVHEHGNVL…VSAINKGDKS (135 aa)) is the MGS-like domain. The segment at 930–1064 (FKVHEHGNVL…VSAINKGDKS (135 aa)) is allosteric domain.

Belongs to the CarB family. Composed of two chains; the small (or glutamine) chain promotes the hydrolysis of glutamine to ammonia, which is used by the large (or ammonia) chain to synthesize carbamoyl phosphate. Tetramer of heterodimers (alpha,beta)4. Requires Mg(2+) as cofactor. Mn(2+) serves as cofactor.

It carries out the reaction hydrogencarbonate + L-glutamine + 2 ATP + H2O = carbamoyl phosphate + L-glutamate + 2 ADP + phosphate + 2 H(+). The enzyme catalyses hydrogencarbonate + NH4(+) + 2 ATP = carbamoyl phosphate + 2 ADP + phosphate + 2 H(+). The protein operates within amino-acid biosynthesis; L-arginine biosynthesis; carbamoyl phosphate from bicarbonate: step 1/1. It participates in pyrimidine metabolism; UMP biosynthesis via de novo pathway; (S)-dihydroorotate from bicarbonate: step 1/3. In terms of biological role, large subunit of the glutamine-dependent carbamoyl phosphate synthetase (CPSase). CPSase catalyzes the formation of carbamoyl phosphate from the ammonia moiety of glutamine, carbonate, and phosphate donated by ATP, constituting the first step of 2 biosynthetic pathways, one leading to arginine and/or urea and the other to pyrimidine nucleotides. The large subunit (synthetase) binds the substrates ammonia (free or transferred from glutamine from the small subunit), hydrogencarbonate and ATP and carries out an ATP-coupled ligase reaction, activating hydrogencarbonate by forming carboxy phosphate which reacts with ammonia to form carbamoyl phosphate. This chain is Carbamoyl phosphate synthase large chain, found in Oenococcus oeni (strain ATCC BAA-331 / PSU-1).